The following is a 607-amino-acid chain: Chaperone protein DnaK (607 aa).

At Thr-174 the chain carries Phosphothreonine; by autocatalysis. Polar residues predominate over residues 577–594 (QSAGSTAGNPGQGQSTEN). A disordered region spans residues 577–607 (QSAGSTAGNPGQGQSTENPGGKTIDGDYKVN).

It belongs to the heat shock protein 70 family.

Its function is as follows. Acts as a chaperone. The sequence is that of Chaperone protein DnaK from Dictyoglomus turgidum (strain DSM 6724 / Z-1310).